Reading from the N-terminus, the 100-residue chain is Sec-independent protein translocase protein TatA (100 aa).

Residues 1 to 21 (MGALKPWHIAVLVVVLILLFG) form a helical membrane-spanning segment. The span at 44–55 (KSLHDDDRDLAE) shows a compositional bias: basic and acidic residues. Residues 44 to 100 (KSLHDDDRDLAEKANAQAGYQPLPPQVQQEPYPQQTPYQAPPQQQPVVDPVQRARDS) form a disordered region. The span at 69–81 (QVQQEPYPQQTPY) shows a compositional bias: low complexity.

The protein belongs to the TatA/E family. In terms of assembly, the Tat system comprises two distinct complexes: a TatABC complex, containing multiple copies of TatA, TatB and TatC subunits, and a separate TatA complex, containing only TatA subunits. Substrates initially bind to the TatABC complex, which probably triggers association of the separate TatA complex to form the active translocon.

The protein localises to the cell membrane. Its function is as follows. Part of the twin-arginine translocation (Tat) system that transports large folded proteins containing a characteristic twin-arginine motif in their signal peptide across membranes. TatA could form the protein-conducting channel of the Tat system. In Salinispora arenicola (strain CNS-205), this protein is Sec-independent protein translocase protein TatA.